A 243-amino-acid chain; its full sequence is Ribosomal RNA small subunit methyltransferase E 2 (243 aa).

This sequence belongs to the RNA methyltransferase RsmE family.

Its subcellular location is the cytoplasm. The enzyme catalyses uridine(1498) in 16S rRNA + S-adenosyl-L-methionine = N(3)-methyluridine(1498) in 16S rRNA + S-adenosyl-L-homocysteine + H(+). Functionally, specifically methylates the N3 position of the uracil ring of uridine 1498 (m3U1498) in 16S rRNA. Acts on the fully assembled 30S ribosomal subunit. In Borreliella burgdorferi (strain ATCC 35210 / DSM 4680 / CIP 102532 / B31) (Borrelia burgdorferi), this protein is Ribosomal RNA small subunit methyltransferase E 2 (rsmE2).